The following is a 677-amino-acid chain: Gamma-tubulin complex subunit mod21 (677 aa).

In terms of assembly, component of the gamma-tubulin complex composed of at least alp4, alp6, alp16, ghf1, gtb1 and mod21.

The protein localises to the cytoplasm. It localises to the cytoskeleton. Its subcellular location is the microtubule organizing center. It is found in the spindle pole body. Its function is as follows. Component of the gamma-tubulin complex that is required for the regulation of both interphase microtubule organization and nucleation, and mitotic bipolar spindles. Required for correct septation. This chain is Gamma-tubulin complex subunit mod21, found in Schizosaccharomyces pombe (strain 972 / ATCC 24843) (Fission yeast).